A 195-amino-acid chain; its full sequence is Ras-related protein Rab-31 (195 aa).

The GTP site is built by glycine 16, glycine 18, lysine 19, serine 20, serine 21, aspartate 32, and histidine 33. A Mg(2+)-binding site is contributed by serine 20. 2 short sequence motifs (switch) span residues 30–42 (HFDHNISPTIGAS) and 63–79 (AGQERFHSLAPMYYRGS). Serine 36 carries the phosphoserine modification. Threonine 38, glycine 64, asparagine 119, aspartate 122, alanine 150, and lysine 151 together coordinate GTP. Threonine 38 contacts Mg(2+). Residues cysteine 194 and cysteine 195 are each lipidated (S-geranylgeranyl cysteine).

Belongs to the small GTPase superfamily. Rab family. In terms of assembly, interacts (in GDP-bound form) with RIN3 and GAPVD1, which function as guanine exchange factors (GEF). Interacts (in GTP-bound form) with EEA1. Interacts with NGFR. Interacts with EGFR. Interacts with OCRL. Interacts (in GTP-bound form) with APPL2; interaction contributes to or enhances recruitment of APPL2 to the phagosomes; interaction enhances Fc-gamma receptor-mediated phagocytosis through PI3K/Akt signaling in macrophages. It depends on Mg(2+) as a cofactor. As to expression, detected in brain astrocytes, spleen and intestine (at protein level).

The protein localises to the early endosome. The protein resides in the golgi apparatus. Its subcellular location is the trans-Golgi network. It is found in the trans-Golgi network membrane. It localises to the cytoplasmic vesicle. The protein localises to the phagosome. The protein resides in the phagosome membrane. The catalysed reaction is GTP + H2O = GDP + phosphate + H(+). Regulated by guanine nucleotide exchange factors (GEFs) including RIN3 and GAPVD1 which promote the exchange of bound GDP for free GTP. Regulated by GTPase activating proteins (GAPs) which increase the GTP hydrolysis activity. Inhibited by GDP dissociation inhibitors (GDIs) which prevent Rab-GDP dissociation. The small GTPases Rab are key regulators of intracellular membrane trafficking, from the formation of transport vesicles to their fusion with membranes. Rabs cycle between an inactive GDP-bound form and an active GTP-bound form that is able to recruit to membranes different set of downstream effectors directly responsible for vesicle formation, movement, tethering and fusion. Required for the integrity and for normal function of the Golgi apparatus and the trans-Golgi network. Plays a role in insulin-stimulated translocation of GLUT4 to the cell membrane. Plays a role in the maturation of phagosomes that engulf pathogens, such as S.aureus and Mycobacterium. Plays a role in M6PR transport from the trans-Golgi network to endosomes. Plays a role in the internalization of EGFR from the cell membrane into endosomes. This is Ras-related protein Rab-31 from Rattus norvegicus (Rat).